The sequence spans 233 residues: Probable 2-phosphosulfolactate phosphatase (233 aa).

Belongs to the ComB family. Mg(2+) serves as cofactor.

It catalyses the reaction (2R)-O-phospho-3-sulfolactate + H2O = (2R)-3-sulfolactate + phosphate. The protein is Probable 2-phosphosulfolactate phosphatase of Clostridium tetani (strain Massachusetts / E88).